The sequence spans 350 residues: 3-dehydroquinate synthase (350 aa).

Residues 63–68 (DGEEYK), 97–101 (GVIGD), 121–122 (TT), lysine 134, lysine 143, and 161–164 (FLKT) each bind NAD(+). Glutamate 176, histidine 235, and histidine 252 together coordinate Zn(2+).

Belongs to the sugar phosphate cyclases superfamily. Dehydroquinate synthase family. The cofactor is Co(2+). Requires Zn(2+) as cofactor. It depends on NAD(+) as a cofactor.

The protein localises to the cytoplasm. It carries out the reaction 7-phospho-2-dehydro-3-deoxy-D-arabino-heptonate = 3-dehydroquinate + phosphate. The protein operates within metabolic intermediate biosynthesis; chorismate biosynthesis; chorismate from D-erythrose 4-phosphate and phosphoenolpyruvate: step 2/7. In terms of biological role, catalyzes the conversion of 3-deoxy-D-arabino-heptulosonate 7-phosphate (DAHP) to dehydroquinate (DHQ). The protein is 3-dehydroquinate synthase of Sulfurovum sp. (strain NBC37-1).